A 437-amino-acid chain; its full sequence is Enolase (437 aa).

Glutamine 166 is a (2R)-2-phosphoglycerate binding site. Residue glutamate 208 is the Proton donor of the active site. Aspartate 245, glutamate 295, and aspartate 322 together coordinate Mg(2+). (2R)-2-phosphoglycerate-binding residues include lysine 347, arginine 376, serine 377, and lysine 398. The active-site Proton acceptor is lysine 347.

Belongs to the enolase family. Mg(2+) is required as a cofactor.

The protein localises to the cytoplasm. It is found in the secreted. It localises to the cell surface. It carries out the reaction (2R)-2-phosphoglycerate = phosphoenolpyruvate + H2O. The protein operates within carbohydrate degradation; glycolysis; pyruvate from D-glyceraldehyde 3-phosphate: step 4/5. Catalyzes the reversible conversion of 2-phosphoglycerate (2-PG) into phosphoenolpyruvate (PEP). It is essential for the degradation of carbohydrates via glycolysis. This chain is Enolase, found in Lachnoclostridium phytofermentans (strain ATCC 700394 / DSM 18823 / ISDg) (Clostridium phytofermentans).